A 135-amino-acid polypeptide reads, in one-letter code: Nucleoside diphosphate kinase (135 aa).

Residues Lys-11, Phe-59, Arg-87, Thr-93, Arg-104, and Asn-114 each coordinate ATP. Catalysis depends on His-117, which acts as the Pros-phosphohistidine intermediate.

Belongs to the NDK family. As to quaternary structure, homotetramer. Requires Mg(2+) as cofactor.

It localises to the cytoplasm. It catalyses the reaction a 2'-deoxyribonucleoside 5'-diphosphate + ATP = a 2'-deoxyribonucleoside 5'-triphosphate + ADP. It carries out the reaction a ribonucleoside 5'-diphosphate + ATP = a ribonucleoside 5'-triphosphate + ADP. Functionally, major role in the synthesis of nucleoside triphosphates other than ATP. The ATP gamma phosphate is transferred to the NDP beta phosphate via a ping-pong mechanism, using a phosphorylated active-site intermediate. The protein is Nucleoside diphosphate kinase of Marinomonas sp. (strain MWYL1).